A 417-amino-acid chain; its full sequence is MTASVNSLDLAAIRADFPILKRIMRGGNPLAYLDSGATSQRPLQVLDAEREFLTASNGAVHRGAHQLMEEATDAYEQGRADIALFVGADTDELVFTKNATEALNLVSYVLGDSRFERAVGPGDVIVTTELEHHANLIPWQELARRTGATLRWYGVTDDGRIDLDSLYLDDRVKVVAFTHHSNVTGVLTPVSELVSRAHQSGALTVLDACQSVPHQPVDLHELGVDFAAFSGHKMLGPNGIGVLYGRRELLAQMPPFLTGGSMIETVTMEGATYAPAPQRFEAGTPMTSQVVGLAAAARYLGAIGMAAVEAHERELVAAAIEGLSGIDGVRILGPTSMRDRGSPVAFVVEGVHAHDVGQVLDDGGVAVRVGHHCALPLHRRFGLAATARASFAVYNTADEVDRLVAGVRRSRHFFGRA.

Residue K233 is modified to N6-(pyridoxal phosphate)lysine. The active-site Cysteine persulfide intermediate is the C373.

The protein belongs to the class-V pyridoxal-phosphate-dependent aminotransferase family. Csd subfamily. Requires pyridoxal 5'-phosphate as cofactor.

The catalysed reaction is (sulfur carrier)-H + L-cysteine = (sulfur carrier)-SH + L-alanine. Its function is as follows. Catalyzes the removal of elemental sulfur and selenium atoms from L-cysteine, L-cystine, L-selenocysteine, and L-selenocystine to produce L-alanine. The polypeptide is Probable cysteine desulfurase (csd) (Mycobacterium tuberculosis (strain CDC 1551 / Oshkosh)).